The following is a 162-amino-acid chain: NADH-quinone oxidoreductase subunit I (162 aa).

4Fe-4S ferredoxin-type domains are found at residues 53-83 and 93-122; these read LRRYPNGEERCIACKLCEAVCPAMAITIESE and TRYDIDLTKCIFCGFCEESCPVDSIVETHI. [4Fe-4S] cluster contacts are provided by C63, C66, C69, C73, C102, C105, C108, and C112.

The protein belongs to the complex I 23 kDa subunit family. NDH-1 is composed of 14 different subunits. Subunits NuoA, H, J, K, L, M, N constitute the membrane sector of the complex. [4Fe-4S] cluster serves as cofactor.

Its subcellular location is the cell inner membrane. It catalyses the reaction a quinone + NADH + 5 H(+)(in) = a quinol + NAD(+) + 4 H(+)(out). In terms of biological role, NDH-1 shuttles electrons from NADH, via FMN and iron-sulfur (Fe-S) centers, to quinones in the respiratory chain. The immediate electron acceptor for the enzyme in this species is believed to be ubiquinone. Couples the redox reaction to proton translocation (for every two electrons transferred, four hydrogen ions are translocated across the cytoplasmic membrane), and thus conserves the redox energy in a proton gradient. This Herminiimonas arsenicoxydans protein is NADH-quinone oxidoreductase subunit I.